Reading from the N-terminus, the 87-residue chain is MQKVTLGLLVFLAGFPVLDANDLEDKNSPFYYDWHSLQVGGLICAGVLCAMGIIIVMSAKCKCKFGQKSGHHPGETPPLITPGSAQS.

The first 20 residues, 1–20, serve as a signal peptide directing secretion; the sequence is MQKVTLGLLVFLAGFPVLDA. Residues 21–38 lie on the Extracellular side of the membrane; sequence NDLEDKNSPFYYDWHSLQ. A helical membrane pass occupies residues 39–59; the sequence is VGGLICAGVLCAMGIIIVMSA. The Cytoplasmic segment spans residues 60–87; sequence KCKCKFGQKSGHHPGETPPLITPGSAQS. A disordered region spans residues 66–87; that stretch reads GQKSGHHPGETPPLITPGSAQS.

It belongs to the FXYD family. Regulatory subunit of the sodium/potassium-transporting ATPase which is composed of a catalytic alpha subunit, a non-catalytic beta subunit and an additional regulatory subunit. Interacts with catalytic alpha subunit ATP1A1. Also interacts with non-catalytic beta subunit ATP1B1. Interacts with the ATP1A1-ATP1B1, ATP1A2-ATP1B1 and ATP1A3-ATP1B1 NKA isozymes. Post-translationally, glutathionylated. Isoform 1: Expressed mainly in differentiated cells (at protein level). Isoform 2: Expressed mainly in undifferentiated cells (at protein level).

Its subcellular location is the cell membrane. Functionally, associates with and regulates the activity of the sodium/potassium-transporting ATPase (NKA) which transports Na(+) out of the cell and K(+) into the cell. Reduces glutathionylation of the NKA beta-1 subunit ATP1B1, thus reversing glutathionylation-mediated inhibition of ATP1B1. Induces a hyperpolarization-activated chloride current when expressed in Xenopus oocytes. Its function is as follows. Decreases the apparent K+ and Na+ affinity of the sodium/potassium-transporting ATPase over a large range of membrane potentials. In terms of biological role, decreases the apparent K+ affinity of the sodium/potassium-transporting ATPase only at slightly negative and positive membrane potentials and increases the apparent Na+ affinity over a large range of membrane potentials. The sequence is that of FXYD domain-containing ion transport regulator 3 (FXYD3) from Homo sapiens (Human).